A 247-amino-acid polypeptide reads, in one-letter code: 5'-nucleotidase SurE (247 aa).

Asp-8, Asp-9, Ser-39, and Asn-91 together coordinate a divalent metal cation.

It belongs to the SurE nucleotidase family. A divalent metal cation serves as cofactor.

The protein resides in the cytoplasm. It carries out the reaction a ribonucleoside 5'-phosphate + H2O = a ribonucleoside + phosphate. In terms of biological role, nucleotidase that shows phosphatase activity on nucleoside 5'-monophosphates. The protein is 5'-nucleotidase SurE of Pelobacter propionicus (strain DSM 2379 / NBRC 103807 / OttBd1).